We begin with the raw amino-acid sequence, 267 residues long: 4-hydroxy-tetrahydrodipicolinate reductase (267 aa).

NAD(+)-binding positions include 8–13 (GAAGRM) and Asp34. Arg35 contributes to the NADP(+) binding site. Residues 98-100 (GTT) and 122-125 (AANF) each bind NAD(+). Catalysis depends on His155, which acts as the Proton donor/acceptor. His156 serves as a coordination point for (S)-2,3,4,5-tetrahydrodipicolinate. Catalysis depends on Lys159, which acts as the Proton donor. 165-166 (GT) contributes to the (S)-2,3,4,5-tetrahydrodipicolinate binding site.

The protein belongs to the DapB family.

It is found in the cytoplasm. The enzyme catalyses (S)-2,3,4,5-tetrahydrodipicolinate + NAD(+) + H2O = (2S,4S)-4-hydroxy-2,3,4,5-tetrahydrodipicolinate + NADH + H(+). The catalysed reaction is (S)-2,3,4,5-tetrahydrodipicolinate + NADP(+) + H2O = (2S,4S)-4-hydroxy-2,3,4,5-tetrahydrodipicolinate + NADPH + H(+). The protein operates within amino-acid biosynthesis; L-lysine biosynthesis via DAP pathway; (S)-tetrahydrodipicolinate from L-aspartate: step 4/4. Functionally, catalyzes the conversion of 4-hydroxy-tetrahydrodipicolinate (HTPA) to tetrahydrodipicolinate. This chain is 4-hydroxy-tetrahydrodipicolinate reductase, found in Pseudomonas putida (strain GB-1).